Reading from the N-terminus, the 344-residue chain is Galactinol synthase 1 (344 aa).

K111 is an active-site residue. Positions 127, 129, and 265 each coordinate Mn(2+).

This sequence belongs to the glycosyltransferase 8 family. Galactosyltransferase subfamily. A divalent metal cation is required as a cofactor. As to expression, accumulates in mature seeds. Expressed in seedlings (axes and cotyledons), meristems, vascular tissues and emerging lateral roots. Present in abscission zones.

It is found in the cytoplasm. The catalysed reaction is myo-inositol + UDP-alpha-D-galactose = alpha-D-galactosyl-(1-&gt;3)-1D-myo-inositol + UDP + H(+). Galactinol synthase involved in the biosynthesis of raffinose family oligosaccharides (RFOs) that function as osmoprotectants. Promotes plant stress tolerance such as heat, chilling, salinity and methylviologen (MV), a superoxide radical generating drug, by mediating raffinose accumulation, an osmoprotective substance. This is Galactinol synthase 1 (GOLS1) from Arabidopsis thaliana (Mouse-ear cress).